Reading from the N-terminus, the 517-residue chain is Golgi-associated kinase 1B (517 aa).

Topologically, residues 1–36 are cytoplasmic; it reads MTCPDKPGQLVNWFVCSLCAPRVCKLWSSRRPRTRR. The helical; Signal-anchor for type II membrane protein transmembrane segment at 37 to 56 threads the bilayer; it reads NLLLGTACAIYLGFLVSQVG. At 57 to 517 the chain is on the extracellular side; sequence RGSFQHGQAT…HGARVLPMNE (461 aa). N-linked (GlcNAc...) asparagine glycosylation is found at N98 and N287.

It belongs to the GASK family.

The protein resides in the golgi apparatus membrane. The chain is Golgi-associated kinase 1B from Mus musculus (Mouse).